Reading from the N-terminus, the 195-residue chain is Holliday junction branch migration complex subunit RuvA (195 aa).

The domain I stretch occupies residues 1–61; it reads MYEYFEGIIS…DTGITLYGFQ (61 aa). The interval 62–140 is domain II; it reads DQDDKGLFLK…DYVARLDKPE (79 aa). The flexible linker stretch occupies residues 141–146; sequence NGEEIS. Positions 146 to 195 are domain III; that stretch reads SPALNDALLALIALGYTQKEVDRITPKLVEIEADTADQYIKKGLALLLKK.

It belongs to the RuvA family. In terms of assembly, homotetramer. Forms an RuvA(8)-RuvB(12)-Holliday junction (HJ) complex. HJ DNA is sandwiched between 2 RuvA tetramers; dsDNA enters through RuvA and exits via RuvB. An RuvB hexamer assembles on each DNA strand where it exits the tetramer. Each RuvB hexamer is contacted by two RuvA subunits (via domain III) on 2 adjacent RuvB subunits; this complex drives branch migration. In the full resolvosome a probable DNA-RuvA(4)-RuvB(12)-RuvC(2) complex forms which resolves the HJ.

The protein resides in the cytoplasm. The RuvA-RuvB-RuvC complex processes Holliday junction (HJ) DNA during genetic recombination and DNA repair, while the RuvA-RuvB complex plays an important role in the rescue of blocked DNA replication forks via replication fork reversal (RFR). RuvA specifically binds to HJ cruciform DNA, conferring on it an open structure. The RuvB hexamer acts as an ATP-dependent pump, pulling dsDNA into and through the RuvAB complex. HJ branch migration allows RuvC to scan DNA until it finds its consensus sequence, where it cleaves and resolves the cruciform DNA. This chain is Holliday junction branch migration complex subunit RuvA, found in Lactobacillus acidophilus (strain ATCC 700396 / NCK56 / N2 / NCFM).